A 186-amino-acid chain; its full sequence is Large ribosomal subunit protein bL9 (186 aa).

Residues 153–186 (ELRQVKSQSQKSQQQEAKQNEVGEATDSDKADQK) are disordered. A compositionally biased stretch (low complexity) spans 157-169 (VKSQSQKSQQQEA).

Belongs to the bacterial ribosomal protein bL9 family.

Functionally, binds to the 23S rRNA. This chain is Large ribosomal subunit protein bL9, found in Wolbachia sp. subsp. Brugia malayi (strain TRS).